The primary structure comprises 1087 residues: Collagen alpha-2(I) chain (1087 aa).

Residues 1–931 (APDPGPGPMG…PGPAGGGYDV (931 aa)) are disordered. 3 stretches are compositionally biased toward low complexity: residues 83 to 120 (EPGA…AAGP), 150 to 159 (EPGPNGAVGP), and 166 to 187 (PGNN…AGAP). A compositionally biased stretch (pro residues) spans 189–199 (FPGPRGGPGPQ). The segment covering 201-211 (PQGAAGQRGLA) has biased composition (low complexity). Gly residues predominate over residues 218–227 (GVKGDGGPKG). Composition is skewed to low complexity over residues 228–241 (EPGN…PGPQ), 278–321 (AAGP…AGPS), 335–345 (PRGQPGNLGFP), 360–384 (KGAT…TGAT), and 396–408 (QGAA…QGLP). Residues 409–418 (GPAGGAGEAG) show a composition bias toward gly residues. A compositionally biased stretch (low complexity) spans 443–453 (NPGAAGASGPQ). Over residues 466–493 (GTDGGKGEPGAAGAAGGPGHQGPGGMPG) the composition is skewed to gly residues. Positions 504–515 (KGEKGEAGHRGP) are enriched in basic and acidic residues. Composition is skewed to low complexity over residues 560 to 602 (PAGA…TGAR), 613 to 640 (FPGA…PAGK), and 677 to 695 (PGPA…LGLQ). Positions 708-717 (GSPGGAGAVG) are enriched in gly residues. Low complexity-rich tracts occupy residues 718 to 740 (EPGR…LGLP) and 776 to 788 (PGSS…AGAP). The segment covering 792–812 (GPSGGAGRGNRGESGPGGAAG) has biased composition (gly residues). Residues 813–828 (AVGPAGARGAAGPSGP) are compositionally biased toward low complexity. Residues 829 to 843 (RGEKGVAGEKGERGL) show a composition bias toward basic and acidic residues. Low complexity-rich tracts occupy residues 849-868 (LQGM…AGPN) and 897-909 (APGA…YVGP). Over residues 910 to 924 (AGPPGSPGLPGPPGP) the composition is skewed to pro residues. The region spanning 929-1087 (YDVSGYDEYR…GLDLGPVCFK (159 aa)) is the Fibrillar collagen NC1 domain.

It belongs to the fibrillar collagen family.

It is found in the secreted. It localises to the extracellular space. Its subcellular location is the extracellular matrix. This is Collagen alpha-2(I) chain from Epinephelus costae (Goldblotch grouper).